A 61-amino-acid chain; its full sequence is UPF0434 protein TM1040_0056 (61 aa).

The protein belongs to the UPF0434 family.

The polypeptide is UPF0434 protein TM1040_0056 (Ruegeria sp. (strain TM1040) (Silicibacter sp.)).